The following is a 527-amino-acid chain: Bifunctional purine biosynthesis protein PurH (527 aa).

The MGS-like domain occupies 9 to 156; the sequence is NAKRPIRRAL…KNHPSVAVVV (148 aa).

The protein belongs to the PurH family.

The catalysed reaction is (6R)-10-formyltetrahydrofolate + 5-amino-1-(5-phospho-beta-D-ribosyl)imidazole-4-carboxamide = 5-formamido-1-(5-phospho-D-ribosyl)imidazole-4-carboxamide + (6S)-5,6,7,8-tetrahydrofolate. It carries out the reaction IMP + H2O = 5-formamido-1-(5-phospho-D-ribosyl)imidazole-4-carboxamide. Its pathway is purine metabolism; IMP biosynthesis via de novo pathway; 5-formamido-1-(5-phospho-D-ribosyl)imidazole-4-carboxamide from 5-amino-1-(5-phospho-D-ribosyl)imidazole-4-carboxamide (10-formyl THF route): step 1/1. It participates in purine metabolism; IMP biosynthesis via de novo pathway; IMP from 5-formamido-1-(5-phospho-D-ribosyl)imidazole-4-carboxamide: step 1/1. This is Bifunctional purine biosynthesis protein PurH from Mycolicibacterium paratuberculosis (strain ATCC BAA-968 / K-10) (Mycobacterium paratuberculosis).